The chain runs to 556 residues: Protein trichome birefringence-like 1 (556 aa).

A helical; Signal-anchor for type II membrane protein transmembrane segment spans residues 38-58 (TFVYAFVVTFVALTVFLAFSP). Positions 269–271 (GDS) match the GDS motif motif. The short motif at 514 to 528 (DCSHWCLPGVPDSWN) is the DCXHWCLPGXXDXWN motif element.

The protein belongs to the PC-esterase family. TBL subfamily. Not expressed in trichomes.

It localises to the membrane. Functionally, can complement TBR and is therefore functionally equivalent, but may work in different tissue. May act as a bridging protein that binds pectin and other cell wall polysaccharides. Probably involved in maintaining esterification of pectins. May be involved in the specific O-acetylation of cell wall polymers. The polypeptide is Protein trichome birefringence-like 1 (TBL1) (Arabidopsis thaliana (Mouse-ear cress)).